The sequence spans 434 residues: Isocitrate lyase (434 aa).

Position 91–93 (91–93 (SGW)) interacts with substrate. Residue Asp-157 coordinates Mg(2+). The active-site Proton acceptor is Cys-195. Residues 196–197 (GH), Arg-232, 317–321 (NCSPS), and Thr-351 each bind substrate.

It belongs to the isocitrate lyase/PEP mutase superfamily. Isocitrate lyase family. Homotetramer. Requires Mg(2+) as cofactor.

It catalyses the reaction D-threo-isocitrate = glyoxylate + succinate. The protein operates within carbohydrate metabolism; glyoxylate cycle; (S)-malate from isocitrate: step 1/2. Functionally, involved in the metabolic adaptation in response to environmental changes. Catalyzes the reversible formation of succinate and glyoxylate from isocitrate, a key step of the glyoxylate cycle, which operates as an anaplerotic route for replenishing the tricarboxylic acid cycle during growth on fatty acid substrates. This Salmonella typhimurium (strain LT2 / SGSC1412 / ATCC 700720) protein is Isocitrate lyase (aceA).